A 244-amino-acid chain; its full sequence is U11/U12 small nuclear ribonucleoprotein 35 kDa protein (244 aa).

Residues 51–129 (LTLFVARLNS…HEIFVDYELE (79 aa)) form the RRM domain. The segment covering 146–162 (GKKESGQLRFGGRDRPF) has biased composition (basic and acidic residues). Residues 146 to 244 (GKKESGQLRF…KTRDKRDRSK (99 aa)) are disordered. Lysine 172 participates in a covalent cross-link: Glycyl lysine isopeptide (Lys-Gly) (interchain with G-Cter in SUMO2). Basic and acidic residues-rich tracts occupy residues 173–185 (NEPH…ERRE) and 192–244 (RHWD…DRSK).

In terms of assembly, component of the U11/U12 snRNPs that are part of the U12-type spliceosome.

The protein resides in the nucleus. The protein is U11/U12 small nuclear ribonucleoprotein 35 kDa protein (Snrnp35) of Rattus norvegicus (Rat).